Consider the following 267-residue polypeptide: Phosphatidylglycerol--prolipoprotein diacylglyceryl transferase (267 aa).

4 helical membrane passes run 10 to 30, 54 to 74, 90 to 110, and 116 to 136; these read VAIALGPFKVHWYGLMYVVGF, LLFYGALGVVLGGRVGYALFY, WDGGMSFHGGLIGVLIAAWLF, and LAFFQLTDFVAPLVPLGLGAG. R137 contacts a 1,2-diacyl-sn-glycero-3-phospho-(1'-sn-glycerol). The next 3 membrane-spanning stretches (helical) occupy residues 169–189, 197–217, and 231–251; these read PSPLYEFALEGVVMFVVLWWV, GMISGLFLLLYAVFRFSVEFV, and WLTMGQLLTVPMALAGIALCV.

This sequence belongs to the Lgt family.

The protein resides in the cell inner membrane. The enzyme catalyses L-cysteinyl-[prolipoprotein] + a 1,2-diacyl-sn-glycero-3-phospho-(1'-sn-glycerol) = an S-1,2-diacyl-sn-glyceryl-L-cysteinyl-[prolipoprotein] + sn-glycerol 1-phosphate + H(+). It participates in protein modification; lipoprotein biosynthesis (diacylglyceryl transfer). Catalyzes the transfer of the diacylglyceryl group from phosphatidylglycerol to the sulfhydryl group of the N-terminal cysteine of a prolipoprotein, the first step in the formation of mature lipoproteins. In Chromohalobacter salexigens (strain ATCC BAA-138 / DSM 3043 / CIP 106854 / NCIMB 13768 / 1H11), this protein is Phosphatidylglycerol--prolipoprotein diacylglyceryl transferase.